A 357-amino-acid chain; its full sequence is MKASIYDFTLDELSQLLKPSFRAKQLYLWLYAKYKTSFKDMQNNFSKDFIAYLEQEFTLRTIEIAHVRESVDGSKKYLFKSLRDNHTFEAVLLKMKDKKIDEETNAVLEGEKYTVCVSCQIGCQVGCSFCFTQKGGFVRDLKASEIIQQALLIKEANNLPIEKALNIVFMGMGEPLNNLDEVCKAVEIFNTGMQISPKRITISTSGVADKIPILAGKNLGVQLAISLHAVDDKTRSSLMPLNKKYNIECVLNEVRKWPLEQRKRVMFEYLLIKDLNDSLDCAKKLLKLLNGIKSKVNLILFNPHEGSKFERPSLESARMFADFLNAKGLLCTIRESKALDIEAACGQLREKKLQQKI.

Residue glutamate 89 is the Proton acceptor of the active site. The region spanning 109–340 is the Radical SAM core domain; that stretch reads EGEKYTVCVS…CTIRESKALD (232 aa). Cysteine 116 and cysteine 345 form a disulfide bridge. The [4Fe-4S] cluster site is built by cysteine 123, cysteine 127, and cysteine 130. S-adenosyl-L-methionine contacts are provided by residues 173–174, serine 203, 226–228, and asparagine 302; these read GE and SLH. Cysteine 345 (S-methylcysteine intermediate) is an active-site residue.

The protein belongs to the radical SAM superfamily. RlmN family. Requires [4Fe-4S] cluster as cofactor.

The protein localises to the cytoplasm. It catalyses the reaction adenosine(2503) in 23S rRNA + 2 reduced [2Fe-2S]-[ferredoxin] + 2 S-adenosyl-L-methionine = 2-methyladenosine(2503) in 23S rRNA + 5'-deoxyadenosine + L-methionine + 2 oxidized [2Fe-2S]-[ferredoxin] + S-adenosyl-L-homocysteine. The catalysed reaction is adenosine(37) in tRNA + 2 reduced [2Fe-2S]-[ferredoxin] + 2 S-adenosyl-L-methionine = 2-methyladenosine(37) in tRNA + 5'-deoxyadenosine + L-methionine + 2 oxidized [2Fe-2S]-[ferredoxin] + S-adenosyl-L-homocysteine. In terms of biological role, specifically methylates position 2 of adenine 2503 in 23S rRNA and position 2 of adenine 37 in tRNAs. m2A2503 modification seems to play a crucial role in the proofreading step occurring at the peptidyl transferase center and thus would serve to optimize ribosomal fidelity. This Helicobacter pylori (strain J99 / ATCC 700824) (Campylobacter pylori J99) protein is Dual-specificity RNA methyltransferase RlmN.